Here is a 476-residue protein sequence, read N- to C-terminus: Lactate utilization protein B (476 aa).

2 4Fe-4S ferredoxin-type domains span residues 304–334 (GTEFQPVLQCIRCAACVNVCPVYRHIGGHSY) and 353–382 (YDDYKELPYASSLCAACTEVCPVKIPLHEL). [4Fe-4S] cluster-binding residues include Cys313, Cys316, Cys319, Cys323, Cys366, Cys369, and Cys373.

The protein belongs to the LutB/YkgF family.

In terms of biological role, is involved in L-lactate degradation and allows cells to grow with lactate as the sole carbon source. Has probably a role as an electron transporter during oxidation of L-lactate. The protein is Lactate utilization protein B of Geobacillus thermodenitrificans (strain NG80-2).